A 414-amino-acid chain; its full sequence is Leucine-rich repeat protein 1 (414 aa).

LRR repeat units follow at residues 155–176, 178–199, 201–222, 227–248, 250–271, 273–294, and 295–316; these read SLEH…MLCL, SLRK…IGDL, HLQE…LCHS, SLRS…FCQL, ELKN…IGQL, NLRF…FRNL, and SLEY…PVIK.

As to quaternary structure, component of the probable ECS(LRR1) E3 ubiquitin-protein ligase complex which contains CUL2, RBX1, Elongin BC complex and LRR1. Interacts with CUL2, RBX1, ELOB and ELOC. As to expression, ubiquitous. Maximal expression was seen in the heart and skeletal muscle and minimal expression seen in the kidney.

Its subcellular location is the nucleus. The protein operates within protein modification; protein ubiquitination. In terms of biological role, substrate recognition subunit of an ECS (Elongin BC-CUL2/5-SOCS-box protein) E3 ubiquitin-protein ligase complex which mediates the ubiquitination and subsequent proteasomal degradation of target proteins. ECS(LRR1) ubiquitinates MCM7 and promotes CMG replisome disassembly by VCP and chromatin extraction during S-phase. May negatively regulate the 4-1BB-mediated signaling cascades which result in the activation of NK-kappaB and JNK1. This is Leucine-rich repeat protein 1 from Homo sapiens (Human).